The primary structure comprises 347 residues: GMP reductase (347 aa).

Ala-108–Ala-131 is a binding site for NADP(+). The K(+) site is built by Gly-181 and Gly-183. Cys-186 acts as the Thioimidate intermediate in catalysis. Ile-216–Val-239 is a binding site for NADP(+).

The protein belongs to the IMPDH/GMPR family. GuaC type 1 subfamily. In terms of assembly, homotetramer.

The catalysed reaction is IMP + NH4(+) + NADP(+) = GMP + NADPH + 2 H(+). Catalyzes the irreversible NADPH-dependent deamination of GMP to IMP. It functions in the conversion of nucleobase, nucleoside and nucleotide derivatives of G to A nucleotides, and in maintaining the intracellular balance of A and G nucleotides. The protein is GMP reductase of Escherichia coli O7:K1 (strain IAI39 / ExPEC).